A 106-amino-acid polypeptide reads, in one-letter code: Large ribosomal subunit protein bL21c (106 aa).

The protein belongs to the bacterial ribosomal protein bL21 family. As to quaternary structure, part of the 50S ribosomal subunit.

It is found in the plastid. Its subcellular location is the chloroplast. Its function is as follows. This protein binds to 23S rRNA. This is Large ribosomal subunit protein bL21c from Gracilaria tenuistipitata var. liui (Red alga).